A 124-amino-acid polypeptide reads, in one-letter code: Predicted GPI-anchored protein 11 (124 aa).

An N-terminal signal peptide occupies residues 1 to 18 (MKFQFVTALALASTMAVA). Residues 38 to 59 (REGGSTGAELQDNNQPTAGLFG) are disordered. Ser-107 carries GPI-anchor amidated serine lipidation. Residues 108–124 (GAAGGVGNLFSGILGGL) constitute a propeptide, removed in mature form.

Its subcellular location is the cell membrane. The chain is Predicted GPI-anchored protein 11 (PGA11) from Candida albicans (strain SC5314 / ATCC MYA-2876) (Yeast).